Consider the following 208-residue polypeptide: GATA transcription factor 20 (208 aa).

Residues 94 to 119 form a GATA-type zinc finger; sequence CASCDTTSTPLWRNGPKGPKSLCNAC.

Belongs to the type IV zinc-finger family. Class B subfamily.

It localises to the nucleus. Its function is as follows. Transcriptional regulator that specifically binds 5'-GATA-3' or 5'-GAT-3' motifs within gene promoters. This Arabidopsis thaliana (Mouse-ear cress) protein is GATA transcription factor 20.